Here is a 190-residue protein sequence, read N- to C-terminus: PBP1-interacting protein LSM12 (190 aa).

Residues 2–69 (PVCNNDSQLI…IKEVTALRDN (68 aa)) form the Sm domain. The region spanning 84–190 (PSMQAARDRS…ERVQKTLSKK (107 aa)) is the AD domain.

Belongs to the LSM12 family. Forms a complex composed of at least MKT1, PBP1, XAC1 and LSM12. Forms a complex composed of at least MKT1L, PBP1, XAC1 and LSM12. Within the complex, interacts with PBP1; the interaction is direct.

Functionally, involved in post-transcriptional regulation of gene expression. The polypeptide is PBP1-interacting protein LSM12 (Trypanosoma brucei brucei (strain 927/4 GUTat10.1)).